A 193-amino-acid chain; its full sequence is Phosphoheptose isomerase (193 aa).

The region spanning 37 to 193 (IAQSFKNEKK…LIIEKEMQKN (157 aa)) is the SIS domain. 52–54 (NGG) contributes to the substrate binding site. The Zn(2+) site is built by His-61 and Glu-65. Substrate-binding positions include Glu-65, 93-94 (ND), 119-121 (STS), Ser-124, and Gln-172. Positions 172 and 180 each coordinate Zn(2+).

The protein belongs to the SIS family. GmhA subfamily. Homotetramer. Zn(2+) is required as a cofactor.

It localises to the cytoplasm. It carries out the reaction 2 D-sedoheptulose 7-phosphate = D-glycero-alpha-D-manno-heptose 7-phosphate + D-glycero-beta-D-manno-heptose 7-phosphate. Its pathway is carbohydrate biosynthesis; D-glycero-D-manno-heptose 7-phosphate biosynthesis; D-glycero-alpha-D-manno-heptose 7-phosphate and D-glycero-beta-D-manno-heptose 7-phosphate from sedoheptulose 7-phosphate: step 1/1. Functionally, catalyzes the isomerization of sedoheptulose 7-phosphate in D-glycero-D-manno-heptose 7-phosphate. This is Phosphoheptose isomerase from Buchnera aphidicola subsp. Acyrthosiphon pisum (strain 5A).